The following is a 234-amino-acid chain: Endonuclease NucS (234 aa).

It belongs to the NucS endonuclease family.

The protein resides in the cytoplasm. In terms of biological role, cleaves both 3' and 5' ssDNA extremities of branched DNA structures. In Bifidobacterium animalis subsp. lactis (strain AD011), this protein is Endonuclease NucS.